Consider the following 759-residue polypeptide: Protein MTSS 1 (759 aa).

One can recognise an IMD domain in the interval 1–254; that stretch reads MEAVIEKECS…EQVILDLKGS (254 aa). The stretch at 108-157 forms a coiled coil; the sequence is LQEQMEEWKKVANQLDKDHAKEYKKARQEIKNKSSDTLKLQKKAKKVDAQ. The segment at 259–309 is disordered; sequence SYQTPPSSPSTTMSRKSSVCSSLNSVNSSDSRSSGSHSHSPSSHYRYRSSN. T262 bears the Phosphothreonine mark. S265, S266, S275, and S326 each carry phosphoserine. The disordered stretch occupies residues 331 to 354; that stretch reads QDAFQSKSPSPMPPEAANQLSNGF. T429 is subject to Phosphothreonine. Disordered stretches follow at residues 431–472 and 569–759; these read QRRK…AATR and KRPA…PRFS. A Phosphothreonine modification is found at T607. Residues 612–627 are compositionally biased toward low complexity; the sequence is PIPIKTPVIPVKTPTV. Residues S648 and S651 each carry the phosphoserine modification. The span at 660 to 670 shows a compositional bias: polar residues; it reads GVSNIPSSLWS. A compositionally biased stretch (pro residues) spans 675 to 685; sequence VNPPLPGPKPS. The 18-residue stretch at 731–748 folds into the WH2 domain; it reads QGEDMLNAIRRGVKLKKT.

Belongs to the MTSS family. Binds to actin. As to expression, strongly expressed in the developing neurons and skeletal and cardiac muscles in embryos. Strongly expressed also in liver, outer layers of the kidney, and in the Purkinje cells of the brain.

The protein resides in the cytoplasm. It localises to the cytoskeleton. In terms of biological role, inhibits the nucleation of actin filaments in vitro. This Mus musculus (Mouse) protein is Protein MTSS 1.